Consider the following 367-residue polypeptide: Beta sliding clamp (367 aa).

This sequence belongs to the beta sliding clamp family. In terms of assembly, forms a ring-shaped head-to-tail homodimer around DNA which binds and tethers DNA polymerases and other proteins to the DNA. The DNA replisome complex has a single clamp-loading complex (3 tau and 1 each of delta, delta', psi and chi subunits) which binds 3 Pol III cores (1 core on the leading strand and 2 on the lagging strand) each with a beta sliding clamp dimer. Additional proteins in the replisome are other copies of gamma, psi and chi, Ssb, DNA helicase and RNA primase.

It is found in the cytoplasm. Functionally, confers DNA tethering and processivity to DNA polymerases and other proteins. Acts as a clamp, forming a ring around DNA (a reaction catalyzed by the clamp-loading complex) which diffuses in an ATP-independent manner freely and bidirectionally along dsDNA. Initially characterized for its ability to contact the catalytic subunit of DNA polymerase III (Pol III), a complex, multichain enzyme responsible for most of the replicative synthesis in bacteria; Pol III exhibits 3'-5' exonuclease proofreading activity. The beta chain is required for initiation of replication as well as for processivity of DNA replication. The sequence is that of Beta sliding clamp (dnaN) from Proteus mirabilis.